The sequence spans 388 residues: Zinc finger C2H2 protein ECU10_0150 (388 aa).

The C2H2-type zinc finger occupies Tyr-299–His-322.

The protein is Zinc finger C2H2 protein ECU10_0150 of Encephalitozoon cuniculi (strain GB-M1) (Microsporidian parasite).